The chain runs to 260 residues: Small ribosomal subunit protein uS2 (260 aa).

This sequence belongs to the universal ribosomal protein uS2 family.

This chain is Small ribosomal subunit protein uS2 (rpsB), found in Borreliella burgdorferi (strain ATCC 35210 / DSM 4680 / CIP 102532 / B31) (Borrelia burgdorferi).